Here is a 234-residue protein sequence, read N- to C-terminus: Large ribosomal subunit protein uL1 (234 aa).

This sequence belongs to the universal ribosomal protein uL1 family. In terms of assembly, part of the 50S ribosomal subunit.

Binds directly to 23S rRNA. The L1 stalk is quite mobile in the ribosome, and is involved in E site tRNA release. Its function is as follows. Protein L1 is also a translational repressor protein, it controls the translation of the L11 operon by binding to its mRNA. The polypeptide is Large ribosomal subunit protein uL1 (Serratia marcescens).